The sequence spans 465 residues: UDP-glycosyltransferase 89A2 (465 aa).

Residues S291, 342 to 344, 359 to 367, and 381 to 384 each bind UDP-alpha-D-glucose; these read VSQ, HCGWNSVLE, and EADQ.

It belongs to the UDP-glycosyltransferase family.

Its function is as follows. Glucosyltransferase that glucosylates benzoates and benzoate derivatives in vitro. This chain is UDP-glycosyltransferase 89A2 (UGT89A2), found in Arabidopsis thaliana (Mouse-ear cress).